Reading from the N-terminus, the 500-residue chain is Lysine--tRNA ligase (500 aa).

Mg(2+)-binding residues include Glu-410 and Glu-417.

It belongs to the class-II aminoacyl-tRNA synthetase family. As to quaternary structure, homodimer. It depends on Mg(2+) as a cofactor.

It is found in the cytoplasm. The enzyme catalyses tRNA(Lys) + L-lysine + ATP = L-lysyl-tRNA(Lys) + AMP + diphosphate. This Pseudomonas savastanoi pv. phaseolicola (strain 1448A / Race 6) (Pseudomonas syringae pv. phaseolicola (strain 1448A / Race 6)) protein is Lysine--tRNA ligase.